Consider the following 378-residue polypeptide: 3-dehydroquinate synthase (378 aa).

Residues 111-115 (GVIGD), 135-136 (TS), lysine 148, and lysine 157 contribute to the NAD(+) site. Glutamate 190, histidine 252, and histidine 271 together coordinate Zn(2+).

It belongs to the sugar phosphate cyclases superfamily. Dehydroquinate synthase family. Requires NAD(+) as cofactor. Co(2+) serves as cofactor. The cofactor is Zn(2+).

It localises to the cytoplasm. It catalyses the reaction 7-phospho-2-dehydro-3-deoxy-D-arabino-heptonate = 3-dehydroquinate + phosphate. Its pathway is metabolic intermediate biosynthesis; chorismate biosynthesis; chorismate from D-erythrose 4-phosphate and phosphoenolpyruvate: step 2/7. Its function is as follows. Catalyzes the conversion of 3-deoxy-D-arabino-heptulosonate 7-phosphate (DAHP) to dehydroquinate (DHQ). The chain is 3-dehydroquinate synthase from Mesorhizobium japonicum (strain LMG 29417 / CECT 9101 / MAFF 303099) (Mesorhizobium loti (strain MAFF 303099)).